We begin with the raw amino-acid sequence, 506 residues long: Cobyric acid synthase (506 aa).

Residues 251 to 448 (DITIAIVQLP…LHGLFDSDAF (198 aa)) form the GATase cobBQ-type domain. The active-site Nucleophile is the C332. Residue H440 is part of the active site.

The protein belongs to the CobB/CobQ family. CobQ subfamily.

It participates in cofactor biosynthesis; adenosylcobalamin biosynthesis. Its function is as follows. Catalyzes amidations at positions B, D, E, and G on adenosylcobyrinic A,C-diamide. NH(2) groups are provided by glutamine, and one molecule of ATP is hydrogenolyzed for each amidation. This Salmonella heidelberg (strain SL476) protein is Cobyric acid synthase.